The chain runs to 299 residues: NEDD8-activating enzyme E1 catalytic subunit (299 aa).

Position 12–37 (12–37 (GLGCEILKNLTMLSFVKQVHIVDIDT)) interacts with ATP. Cys168 functions as the Glycyl thioester intermediate in the catalytic mechanism.

Belongs to the ubiquitin-activating E1 family. UBA3 subfamily. Heterodimer of UBA3 and ULA1. Interacts with NEDD8 and UBC12.

The catalysed reaction is ATP + [NEDD8 protein] + [E1 NEDD8-activating enzyme]-L-cysteine = AMP + diphosphate + [E1 NEDD8-activating enzyme]-S-[NEDD8 protein]-yl-L-cysteine.. It participates in protein modification; protein neddylation. Its function is as follows. Catalytic subunit of the dimeric UBA3-ULA1 E1 enzyme. E1 activates NEDD8/RUB1 by first adenylating its C-terminal glycine residue with ATP, thereafter linking this residue to the side chain of the catalytic cysteine, yielding a NEDD8-UBA3 thioester and free AMP. E1 finally transfers NEDD8 to the catalytic cysteine of UBC12. The sequence is that of NEDD8-activating enzyme E1 catalytic subunit (UBA3) from Saccharomyces cerevisiae (strain ATCC 204508 / S288c) (Baker's yeast).